The chain runs to 95 residues: Cerebratulus toxin A-III (95 aa).

3 disulfides stabilise this stretch: Cys17–Cys38, Cys23–Cys34, and Cys48–Cys61.

This sequence belongs to the worm cytolysin family.

It is found in the secreted. Functionally, permeabilizes a variety of cells. Forms large pores which allows the release of large proteins almost as rapidly as small organic molecules and inorganic ions. At sublytic concentrations, the toxin also inhibits protein kinase C and endogenous voltage-gated cation selective (sodium, calcium) channels occurring in the nervous and cardiovascular systems. The chain is Cerebratulus toxin A-III from Cerebratulus lacteus (Milky ribbon worm).